We begin with the raw amino-acid sequence, 390 residues long: Sister chromatid cohesion protein DCC1 (390 aa).

Belongs to the DCC1 family. In terms of assembly, component of the ctf18-RFC complex which consists of ctf18, ctf8, dscc1 and the RFC complex.

It is found in the nucleus. In terms of biological role, loads pcna onto primed templates regulating velocity, spacing and restart activity of replication forks. May couple DNA replication to sister chromatid cohesion. The chain is Sister chromatid cohesion protein DCC1 (dscc1) from Xenopus laevis (African clawed frog).